A 525-amino-acid chain; its full sequence is GMP synthase [glutamine-hydrolyzing] (525 aa).

In terms of domain architecture, Glutamine amidotransferase type-1 spans 9–207 (RILILDFGSQ…ILDICECEAL (199 aa)). Catalysis depends on Cys86, which acts as the Nucleophile. Active-site residues include His181 and Glu183. The GMPS ATP-PPase domain occupies 208 to 400 (WTPSKIAEDA…LGLPYDMVYR (193 aa)). An ATP-binding site is contributed by 235-241 (SGGVDSS).

Homodimer.

The catalysed reaction is XMP + L-glutamine + ATP + H2O = GMP + L-glutamate + AMP + diphosphate + 2 H(+). It functions in the pathway purine metabolism; GMP biosynthesis; GMP from XMP (L-Gln route): step 1/1. In terms of biological role, catalyzes the synthesis of GMP from XMP. The protein is GMP synthase [glutamine-hydrolyzing] of Pseudomonas fluorescens (strain SBW25).